We begin with the raw amino-acid sequence, 678 residues long: MVLTTNLYSLNLRSTFFFTNTITCPTLFTFKLSSVSNPRRVFPNIRAHVSAASSNSELESLLSTDRKLISKQSNNGASSISSGVRLENISKSYEGITVLKDVTWEVKKGEKVGLIGVNGAGKTTQLRIITGQEEPDSGNVIWAKPNLKVAFLSQEFEVSMGKTVKEEFMCTFKEEMEIARKLENLQKAIEEAVDDLELMGKLLDEFDLLQRRAQEVDLDSIHAKISKLMSELGFVSEDADRLVASFSSGWQMRMSLGKILLQNPDLLLLDEPTNHLDLDTIEWLEGYLIKQDVPMVIISHDRAFLDQLCTKIVETEMGVSRTFDGNYSQYVISKAELVEAQYAAWEKQQKEIEATKDLISRLSAGANSGRASSAEKKLEKLQEEELIEKPFQRKQMKIRFPECGLSGRSVVTVKNLVFGFDDKMLFNKANLAIERGEKVAIIGPNGCGKSTLLKLIMGLEKPMRGEVILGEHNVLPNYFEQNQAEAQDLDKTVIETVVEAAVDWRIDDIKALLGRCNFKADMLDRKVSLLSGGEKARLAFCKFMVKPSTLLVLDEPTNHLDIPSKEMLEEAINEYKGTVITVSHDRYFIKQIVNRVIEVRDGGLMDYAGDYNYFLEKNVEARARELEREAELEEKAPKVKAKSKMSKAEREARKKQKMKAFQASKKKSKSSKNAKRWN.

ABC transporter domains follow at residues 84–342 (VRLE…EAQY) and 411–626 (VTVK…AREL). ATP is bound by residues 116 to 123 (GVNGAGKT) and 443 to 450 (GPNGCGKS). Residues 630–678 (AELEEKAPKVKAKSKMSKAEREARKKQKMKAFQASKKKSKSSKNAKRWN) form a disordered region. Basic residues predominate over residues 653–678 (RKKQKMKAFQASKKKSKSSKNAKRWN).

This sequence belongs to the ABC transporter superfamily. ABCF family. EF3 (TC 3.A.1.121) subfamily.

The protein is ABC transporter F family member 2 (ABCF2) of Arabidopsis thaliana (Mouse-ear cress).